We begin with the raw amino-acid sequence, 301 residues long: Aquaporin NIP2-3 (301 aa).

The next 2 helical transmembrane spans lie at 57 to 77 (VISE…AASI) and 91 to 111 (SVAG…ISGA). The NPA 1 motif lies at 114-116 (NPA). Transmembrane regions (helical) follow at residues 132–154 (VPFY…KAVL), 172–192 (ALAI…AVAT), and 200–220 (LAGL…GPVS). An NPA 2 motif is present at residues 225-227 (NPA). Residues 238-258 (VFTGLWIYFLGPVVGTLSGAW) traverse the membrane as a helical segment.

This sequence belongs to the MIP/aquaporin (TC 1.A.8) family. NIP (TC 1.A.8.12) subfamily.

It localises to the membrane. Aquaporins facilitate the transport of water and small neutral solutes across cell membranes. The protein is Aquaporin NIP2-3 (NIP2-3) of Zea mays (Maize).